The sequence spans 404 residues: CCA-adding enzyme (404 aa).

Residues glycine 27 and arginine 30 each contribute to the ATP site. 2 residues coordinate CTP: glycine 27 and arginine 30. 2 residues coordinate Mg(2+): aspartate 40 and aspartate 42. 5 residues coordinate ATP: arginine 111, aspartate 154, arginine 157, arginine 160, and arginine 163. Arginine 111, aspartate 154, arginine 157, arginine 160, and arginine 163 together coordinate CTP.

Belongs to the tRNA nucleotidyltransferase/poly(A) polymerase family. Bacterial CCA-adding enzyme type 3 subfamily. As to quaternary structure, homodimer. It depends on Mg(2+) as a cofactor.

It carries out the reaction a tRNA precursor + 2 CTP + ATP = a tRNA with a 3' CCA end + 3 diphosphate. It catalyses the reaction a tRNA with a 3' CCA end + 2 CTP + ATP = a tRNA with a 3' CCACCA end + 3 diphosphate. Catalyzes the addition and repair of the essential 3'-terminal CCA sequence in tRNAs without using a nucleic acid template. Adds these three nucleotides in the order of C, C, and A to the tRNA nucleotide-73, using CTP and ATP as substrates and producing inorganic pyrophosphate. tRNA 3'-terminal CCA addition is required both for tRNA processing and repair. Also involved in tRNA surveillance by mediating tandem CCA addition to generate a CCACCA at the 3' terminus of unstable tRNAs. While stable tRNAs receive only 3'-terminal CCA, unstable tRNAs are marked with CCACCA and rapidly degraded. The polypeptide is CCA-adding enzyme (Geobacillus kaustophilus (strain HTA426)).